The following is a 326-amino-acid chain: Type II secretion system protein K (326 aa).

Residues 1–7 (MNHRQRG) constitute a propeptide, leader sequence. Residues 8-28 (IALLMVLLILALMMVLASAMT) form a helical membrane-spanning segment. At 29-326 (ERSARMYQQT…RYGIYWVADE (298 aa)) the chain is on the periplasmic side.

The protein belongs to the GSP K family. As to quaternary structure, type II secretion is composed of four main components: the outer membrane complex, the inner membrane complex, the cytoplasmic secretion ATPase and the periplasm-spanning pseudopilus. Interacts with core component PulG. Cleaved by prepilin peptidase.

The protein localises to the cell inner membrane. Its function is as follows. Component of the type II secretion system required for the energy-dependent secretion of extracellular factors such as proteases and toxins from the periplasm. Plays a role in pseudopilus assembly and seems to control its length. Interacts with the pseudopilus tip complex that is critical for the recognition and binding of secretion substrates. The sequence is that of Type II secretion system protein K (pulK) from Klebsiella pneumoniae.